Here is a 75-residue protein sequence, read N- to C-terminus: Small ribosomal subunit protein bS18 (75 aa).

Belongs to the bacterial ribosomal protein bS18 family. As to quaternary structure, part of the 30S ribosomal subunit. Forms a tight heterodimer with protein bS6.

Functionally, binds as a heterodimer with protein bS6 to the central domain of the 16S rRNA, where it helps stabilize the platform of the 30S subunit. This Cellvibrio japonicus (strain Ueda107) (Pseudomonas fluorescens subsp. cellulosa) protein is Small ribosomal subunit protein bS18.